Reading from the N-terminus, the 139-residue chain is Heat shock protein homolog C338.06c (139 aa).

The sHSP domain maps to 27-139; it reads AWLSCWGPAL…EFTTRIVEIQ (113 aa).

It belongs to the small heat shock protein (HSP20) family.

The protein localises to the mitochondrion. The chain is Heat shock protein homolog C338.06c from Schizosaccharomyces pombe (strain 972 / ATCC 24843) (Fission yeast).